Reading from the N-terminus, the 438-residue chain is Indole diterpene prenyltransferase paxD (438 aa).

80–81 (FM) lines the L-tryptophan pocket. The substrate site is built by R102, K190, R264, K266, Y268, Y349, and Y418.

This sequence belongs to the tryptophan dimethylallyltransferase family.

Its pathway is secondary metabolite biosynthesis. Functionally, indole diterpene prenyltransferase; part of the gene cluster that mediates the biosynthesis of paxilline, a mycotoxin that acts as an inhibitor of mammalian maxi-K channels. PaxG, the geranylgeranyl diphosphate (GGPP) synthase is proposed to catalyze the first step in paxilline biosynthesis. Condensation of indole-3-glycerol phosphate with GGPP by paxC then forms 3-geranylgeranylindole (3-GGI), followed by epoxidation and cyclization of this intermediate (by paxM and paxB) to form paspaline. Paspaline is subsequently converted to 13-desoxypaxilline by paxP, the latter being then converted to paxilline by paxQ. Finally paxilline can be mono- and di-prenylated by paxD. The polypeptide is Indole diterpene prenyltransferase paxD (Penicillium paxilli).